The primary structure comprises 350 residues: MKKTAIAIAVALAGFATVAQAAPKDNTWYAGGKLGWSQFHDTGWYNSNLNNNGPTHESQLGAGAFGGYQVNPYLGFEMGYDWLGRMPYKGVKVNGAFSSQAVQLTAKLGYPITDDLDIYTRLGGMVWRADSSNSIAGDNHDTGVSPVFAGGVEWAMTRDIATRLEYQWVNNIGDAGTVGVRPDNGMLSVGVSYRFGQEDNAPVVAPAPAPAPEVTTKTFTLKSDVLFNFNKATLKPEGQQALDQLYTQLSNMDPKDGSAVVLGYTDRIGSEQYNQKLSEKRAQSVVDYLVAKGIPANKISARGMGESDPVTGNTCDNVKARAALIDCLAPDRRVAIEVKGYKDVVTQPQA.

The signal sequence occupies residues 1-21; it reads MKKTAIAIAVALAGFATVAQA. 8 beta stranded membrane passes run 27–37, 59–70, 74–82, 100–111, 116–124, 146–155, 160–167, and 186–194; these read TWYAGGKLGWS, QLGAGAFGGYQV, LGFEMGYDW, QAVQLTAKLGYP, LDIYTRLGG, PVFAGGVEWA, IATRLEYQ, and MLSVGVSYR. 4 repeat units span residues 205 to 206, 207 to 208, 209 to 210, and 211 to 212. A 4 X 2 AA tandem repeats of A-P region spans residues 205–212; sequence APAPAPAP. Positions 214 to 342 constitute an OmpA-like domain; the sequence is VTTKTFTLKS…RVAIEVKGYK (129 aa). Residues Cys315 and Cys327 are joined by a disulfide bond.

This sequence belongs to the outer membrane OOP (TC 1.B.6) superfamily. OmpA family. Monomer and homodimer.

It is found in the cell outer membrane. Its function is as follows. With TolR probably plays a role in maintaining the position of the peptidoglycan cell wall in the periplasm. Acts as a porin with low permeability that allows slow penetration of small solutes; an internal gate slows down solute passage. Required for conjugation with F-type plasmids; probably serves as the mating receptor on recipient cells. The protein is Outer membrane protein A of Klebsiella aerogenes (Enterobacter aerogenes).